Consider the following 231-residue polypeptide: MKRAVVVFSGGQDSTTCLVQALQQYDEVHCVTFDYGQRHRAEIDVARELALKLGARAHKVLDVTLLNELAVSSLTRDSIPVPDYEPEADGIPNTFVPGRNILFLTLAAIYAYQVKAEAVITGVCETDFSGYPDCRDEFVKALNHAVSLGMAKDIRFETPLMWIDKAETWALADYYGKLDLVRNETLTCYNGIKGDGCGHCAACNLRANGLNHYLADKPTVMAAMKQKTGLN.

Position 8–18 (8–18 (FSGGQDSTTCL)) interacts with ATP. Zn(2+) is bound by residues C188, C197, C200, and C203.

It belongs to the QueC family. It depends on Zn(2+) as a cofactor.

It carries out the reaction 7-carboxy-7-deazaguanine + NH4(+) + ATP = 7-cyano-7-deazaguanine + ADP + phosphate + H2O + H(+). Its pathway is purine metabolism; 7-cyano-7-deazaguanine biosynthesis. Catalyzes the ATP-dependent conversion of 7-carboxy-7-deazaguanine (CDG) to 7-cyano-7-deazaguanine (preQ(0)). This is 7-cyano-7-deazaguanine synthase from Escherichia coli (strain SMS-3-5 / SECEC).